The following is a 274-amino-acid chain: Hydroxyethylthiazole kinase (274 aa).

Methionine 50 contacts substrate. Residues arginine 126 and serine 171 each contribute to the ATP site. Alanine 200 is a substrate binding site.

The protein belongs to the Thz kinase family. Mg(2+) is required as a cofactor.

It catalyses the reaction 5-(2-hydroxyethyl)-4-methylthiazole + ATP = 4-methyl-5-(2-phosphooxyethyl)-thiazole + ADP + H(+). The protein operates within cofactor biosynthesis; thiamine diphosphate biosynthesis; 4-methyl-5-(2-phosphoethyl)-thiazole from 5-(2-hydroxyethyl)-4-methylthiazole: step 1/1. Its function is as follows. Catalyzes the phosphorylation of the hydroxyl group of 4-methyl-5-beta-hydroxyethylthiazole (THZ). The protein is Hydroxyethylthiazole kinase of Acinetobacter baylyi (strain ATCC 33305 / BD413 / ADP1).